A 210-amino-acid chain; its full sequence is Holliday junction resolvase RecU (210 aa).

Positions 93, 95, 108, and 127 each coordinate Mg(2+).

The protein belongs to the RecU family. The cofactor is Mg(2+).

The protein resides in the cytoplasm. It catalyses the reaction Endonucleolytic cleavage at a junction such as a reciprocal single-stranded crossover between two homologous DNA duplexes (Holliday junction).. Its function is as follows. Endonuclease that resolves Holliday junction intermediates in genetic recombination. Cleaves mobile four-strand junctions by introducing symmetrical nicks in paired strands. Promotes annealing of linear ssDNA with homologous dsDNA. Required for DNA repair, homologous recombination and chromosome segregation. The sequence is that of Holliday junction resolvase RecU from Lactobacillus helveticus (strain DPC 4571).